Reading from the N-terminus, the 232-residue chain is UPF0173 metal-dependent hydrolase Msil_0741 (232 aa).

The protein belongs to the UPF0173 family.

This Methylocella silvestris (strain DSM 15510 / CIP 108128 / LMG 27833 / NCIMB 13906 / BL2) protein is UPF0173 metal-dependent hydrolase Msil_0741.